The primary structure comprises 503 residues: Probable cytosol aminopeptidase (503 aa).

Residues Lys-270 and Asp-275 each contribute to the Mn(2+) site. Lys-282 is a catalytic residue. Mn(2+)-binding residues include Asp-293, Asp-352, and Glu-354. The active site involves Arg-356.

This sequence belongs to the peptidase M17 family. Mn(2+) is required as a cofactor.

The protein localises to the cytoplasm. It catalyses the reaction Release of an N-terminal amino acid, Xaa-|-Yaa-, in which Xaa is preferably Leu, but may be other amino acids including Pro although not Arg or Lys, and Yaa may be Pro. Amino acid amides and methyl esters are also readily hydrolyzed, but rates on arylamides are exceedingly low.. The enzyme catalyses Release of an N-terminal amino acid, preferentially leucine, but not glutamic or aspartic acids.. Functionally, presumably involved in the processing and regular turnover of intracellular proteins. Catalyzes the removal of unsubstituted N-terminal amino acids from various peptides. The protein is Probable cytosol aminopeptidase of Erwinia tasmaniensis (strain DSM 17950 / CFBP 7177 / CIP 109463 / NCPPB 4357 / Et1/99).